The sequence spans 329 residues: Acetyl-coenzyme A carboxylase carboxyl transferase subunit alpha (329 aa).

In terms of domain architecture, CoA carboxyltransferase C-terminal spans 40–294 (QLETLAARRR…REALERNLSE (255 aa)).

Belongs to the AccA family. In terms of assembly, acetyl-CoA carboxylase is a heterohexamer composed of biotin carboxyl carrier protein (AccB), biotin carboxylase (AccC) and two subunits each of ACCase subunit alpha (AccA) and ACCase subunit beta (AccD).

It localises to the cytoplasm. It carries out the reaction N(6)-carboxybiotinyl-L-lysyl-[protein] + acetyl-CoA = N(6)-biotinyl-L-lysyl-[protein] + malonyl-CoA. It functions in the pathway lipid metabolism; malonyl-CoA biosynthesis; malonyl-CoA from acetyl-CoA: step 1/1. Component of the acetyl coenzyme A carboxylase (ACC) complex. First, biotin carboxylase catalyzes the carboxylation of biotin on its carrier protein (BCCP) and then the CO(2) group is transferred by the carboxyltransferase to acetyl-CoA to form malonyl-CoA. The chain is Acetyl-coenzyme A carboxylase carboxyl transferase subunit alpha from Synechococcus sp. (strain CC9311).